We begin with the raw amino-acid sequence, 418 residues long: Serine protease inhibitor A3N (418 aa).

Residues 1-29 form the signal peptide; that stretch reads MTRLVTLELLMAGIGSALLCFPDCILGED. Position 93 is a phosphoserine (S93). 3 N-linked (GlcNAc...) asparagine glycosylation sites follow: N104, N258, and N269. The RCL stretch occupies residues 367-394; sequence GTEAAAATGVKFVPMSAKLDPLIIAFDR.

The protein belongs to the serpin family. Post-translationally, N-glycosylated. In terms of tissue distribution, liver.

The protein resides in the secreted. This chain is Serine protease inhibitor A3N (Serpina3n), found in Rattus norvegicus (Rat).